An 86-amino-acid polypeptide reads, in one-letter code: MHAYVYKSQRKQDTFVYLATRDDFSGLPAEVQAQLAPFSFVLEVALTPERRLAQADVATVREALGKHGFYLQLPKTRVLAGECDYD.

The YcgL domain occupies 1–83; sequence MHAYVYKSQR…PKTRVLAGEC (83 aa).

In Xanthomonas oryzae pv. oryzae (strain MAFF 311018), this protein is YcgL domain-containing protein XOO0428.